A 625-amino-acid polypeptide reads, in one-letter code: PTS system beta-glucoside-specific EIIBCA component (625 aa).

Residues M1–A84 form the PTS EIIB type-1 domain. Topologically, residues M1–R99 are periplasmic. Residue C24 is the Phosphocysteine intermediate; for EIIB activity of the active site. Residues F100–I120 traverse the membrane as a helical segment. Residues Y102–E465 enclose the PTS EIIC type-1 domain. At L121–T140 the chain is on the cytoplasmic side. A helical membrane pass occupies residues Y141–Y161. Residues T162–R166 are Periplasmic-facing. A helical transmembrane segment spans residues F167–L187. Residues T188 to D202 are Cytoplasmic-facing. Residues F203–S223 traverse the membrane as a helical segment. The Periplasmic segment spans residues A224 to N244. The chain crosses the membrane as a helical span at residues F245 to P265. Residues L266 to A284 lie on the Cytoplasmic side of the membrane. The helical transmembrane segment at V285–L305 threads the bilayer. The Periplasmic portion of the chain corresponds to H306–T324. The chain crosses the membrane as a helical span at residues M325 to L345. At C346–K353 the chain is on the cytoplasmic side. The chain crosses the membrane as a helical span at residues V354 to G374. Residues V375–K380 are Periplasmic-facing. A helical transmembrane segment spans residues Y381–Q401. At T402–K403 the chain is on the cytoplasmic side. A helical transmembrane segment spans residues V404 to I424. At D425 to S431 the chain is on the periplasmic side. A helical transmembrane segment spans residues V432–I452. Residues T453–R625 lie on the Cytoplasmic side of the membrane. One can recognise a PTS EIIA type-1 domain in the interval D495–N599. H547 acts as the Tele-phosphohistidine intermediate; for EIIA activity in catalysis.

Its subcellular location is the cell inner membrane. Its function is as follows. The phosphoenolpyruvate-dependent sugar phosphotransferase system (sugar PTS), a major carbohydrate active -transport system, catalyzes the phosphorylation of incoming sugar substrates concomitantly with their translocation across the cell membrane. This system is involved in beta-glucoside transport. In terms of biological role, acts both as a kinase and as a phosphatase on BglG. This Escherichia coli (strain K12) protein is PTS system beta-glucoside-specific EIIBCA component (bglF).